We begin with the raw amino-acid sequence, 316 residues long: N-acetyl-gamma-glutamyl-phosphate reductase (316 aa).

Residue Cys136 is part of the active site.

Belongs to the NAGSA dehydrogenase family. Type 1 subfamily.

Its subcellular location is the cytoplasm. It carries out the reaction N-acetyl-L-glutamate 5-semialdehyde + phosphate + NADP(+) = N-acetyl-L-glutamyl 5-phosphate + NADPH + H(+). It functions in the pathway amino-acid biosynthesis; L-arginine biosynthesis; N(2)-acetyl-L-ornithine from L-glutamate: step 3/4. In terms of biological role, catalyzes the NADPH-dependent reduction of N-acetyl-5-glutamyl phosphate to yield N-acetyl-L-glutamate 5-semialdehyde. The polypeptide is N-acetyl-gamma-glutamyl-phosphate reductase (Xanthomonas axonopodis pv. citri (strain 306)).